The primary structure comprises 364 residues: MKVGERHYHTIWLNEDGRSVDIIDQRWLPHEFRVVTLKTVADVADAIRDMWVRGAPLIGVTAAYGVAIAMAKDPSDAHLDAVWEELNETRPTAINLRWALNAMREYLRPLPEAERADAAYKRAAEIAEEDVELNRAIGANGLDVIREIASKKKPGEPVRILTHCNAGWLATVDYGTATAPIYMAVEEGIPVHVYVDETRPRNQGAYLTAWEMNGHGVPHTLIVDNAGGHLMQHGDIDMVIVGTDRTTANGDVCNKIGTYLKALAARDNDVPFYVALPSPTIDWTVQDGVKEIPIEERTADEVSFVQGRAADGSIASVRISPEGSPAANPAFDVTPARLITGLITERGIATPSPEGLKALFPERS.

Substrate contacts are provided by residues 53–55 (RGA), Arg-90, and Gln-203. The active-site Proton donor is Asp-244. Substrate is bound at residue 254–255 (NK).

It belongs to the eIF-2B alpha/beta/delta subunits family. MtnA subfamily.

It catalyses the reaction 5-(methylsulfanyl)-alpha-D-ribose 1-phosphate = 5-(methylsulfanyl)-D-ribulose 1-phosphate. It functions in the pathway amino-acid biosynthesis; L-methionine biosynthesis via salvage pathway; L-methionine from S-methyl-5-thio-alpha-D-ribose 1-phosphate: step 1/6. Its function is as follows. Catalyzes the interconversion of methylthioribose-1-phosphate (MTR-1-P) into methylthioribulose-1-phosphate (MTRu-1-P). The polypeptide is Methylthioribose-1-phosphate isomerase (Brucella anthropi (strain ATCC 49188 / DSM 6882 / CCUG 24695 / JCM 21032 / LMG 3331 / NBRC 15819 / NCTC 12168 / Alc 37) (Ochrobactrum anthropi)).